Consider the following 156-residue polypeptide: Small ribosomal subunit protein uS7 (156 aa).

This sequence belongs to the universal ribosomal protein uS7 family. Part of the 30S ribosomal subunit. Contacts proteins S9 and S11.

One of the primary rRNA binding proteins, it binds directly to 16S rRNA where it nucleates assembly of the head domain of the 30S subunit. Is located at the subunit interface close to the decoding center, probably blocks exit of the E-site tRNA. The protein is Small ribosomal subunit protein uS7 of Levilactobacillus brevis (strain ATCC 367 / BCRC 12310 / CIP 105137 / JCM 1170 / LMG 11437 / NCIMB 947 / NCTC 947) (Lactobacillus brevis).